The sequence spans 445 residues: MERAPPDGLMNASGTLAGEAAAAGGARGFSAAWTAVLAALMALLIVATVLGNALVMLAFVADSSLRTQNNFFLLNLAISDFLVGAFCIPLYVPYVLTGRWTFGRGLCKLWLVVDYLLCASSVFNIVLISYDRFLSVTRAVSYRAQQGDTRRAVRKMALVWVLAFLLYGPAILSWEYLSGGSSIPEGHCYAEFFYNWYFLITASTLEFFTPFLSVTFFNLSIYLNIQRRTRLRLDGGREAGPEPPPDAQPSPPPAPPSCWGCWPKGHGEAMPLHRYGVGEAGPGVEAGEAALGGGSGGGAAASPTSSSGSSSRGTERPRSLKRGSKPSASSASLEKRMKMVSQSITQRFRLSRDKKVAKSLAIIVSIFGLCWAPYTLLMIIRAACHGRCIPDYWYETSFWLLWANSAVNPVLYPLCHYSFRRAFTKLLCPQKLKVQPHGSLEQCWK.

Over 1-39 (MERAPPDGLMNASGTLAGEAAAAGGARGFSAAWTAVLAA) the chain is Extracellular. The N-linked (GlcNAc...) asparagine glycan is linked to asparagine 11. The helical transmembrane segment at 40-60 (LMALLIVATVLGNALVMLAFV) threads the bilayer. Residues 61 to 70 (ADSSLRTQNN) lie on the Cytoplasmic side of the membrane. Residues 71 to 91 (FFLLNLAISDFLVGAFCIPLY) form a helical membrane-spanning segment. Residues 92-108 (VPYVLTGRWTFGRGLCK) are Extracellular-facing. Residues cysteine 107 and cysteine 188 are joined by a disulfide bond. A helical transmembrane segment spans residues 109-129 (LWLVVDYLLCASSVFNIVLIS). The Cytoplasmic portion of the chain corresponds to 130–156 (YDRFLSVTRAVSYRAQQGDTRRAVRKM). Residues 157–177 (ALVWVLAFLLYGPAILSWEYL) form a helical membrane-spanning segment. Residues 178–196 (SGGSSIPEGHCYAEFFYNW) lie on the Extracellular side of the membrane. Residues 197-217 (YFLITASTLEFFTPFLSVTFF) form a helical membrane-spanning segment. The Cytoplasmic segment spans residues 218 to 359 (NLSIYLNIQR…LSRDKKVAKS (142 aa)). Disordered regions lie at residues 234–259 (DGGR…PSCW) and 286–336 (AGEA…LEKR). The segment covering 241–256 (PEPPPDAQPSPPPAPP) has biased composition (pro residues). Over residues 290 to 299 (ALGGGSGGGA) the composition is skewed to gly residues. Low complexity predominate over residues 300 to 312 (AASPTSSSGSSSR). A helical membrane pass occupies residues 360-380 (LAIIVSIFGLCWAPYTLLMII). Over 381-396 (RAACHGRCIPDYWYET) the chain is Extracellular. A helical membrane pass occupies residues 397 to 417 (SFWLLWANSAVNPVLYPLCHY). Over 418–445 (SFRRAFTKLLCPQKLKVQPHGSLEQCWK) the chain is Cytoplasmic. Serine 439 is modified (phosphoserine).

It belongs to the G-protein coupled receptor 1 family. Expressed abundantly in brain, most notably throughout the thalamus, the ventromedial hypothalamus and the caudate nucleus. Isoform 1 is largely predominant in all tissues.

Its subcellular location is the cell membrane. Its function is as follows. The H3 subclass of histamine receptors could mediate the histamine signals in CNS and peripheral nervous system. Signals through the inhibition of adenylate cyclase and displays high constitutive activity (spontaneous activity in the absence of agonist). This is Histamine H3 receptor (Hrh3) from Rattus norvegicus (Rat).